We begin with the raw amino-acid sequence, 212 residues long: Ribosomal RNA small subunit methyltransferase G (212 aa).

Residues glycine 80, leucine 85, alanine 131–glutamate 132, and arginine 146 contribute to the S-adenosyl-L-methionine site.

It belongs to the methyltransferase superfamily. RNA methyltransferase RsmG family.

The protein localises to the cytoplasm. It catalyses the reaction guanosine(527) in 16S rRNA + S-adenosyl-L-methionine = N(7)-methylguanosine(527) in 16S rRNA + S-adenosyl-L-homocysteine. Functionally, specifically methylates the N7 position of guanine in position 527 of 16S rRNA. The polypeptide is Ribosomal RNA small subunit methyltransferase G (Xanthomonas oryzae pv. oryzae (strain MAFF 311018)).